A 236-amino-acid chain; its full sequence is Eukaryotic translation initiation factor 3 subunit J (236 aa).

The interval 1 to 84 (MADDWESAAD…RLEEEAEAQR (84 aa)) is disordered. Residues 28-46 (GEDEDEDIKDSWEDEEEKK) show a composition bias toward acidic residues. 2 stretches are compositionally biased toward basic and acidic residues: residues 47 to 58 (DEEKPTKTEAPA) and 68 to 77 (AKLEQQARLE).

This sequence belongs to the eIF-3 subunit J family. As to quaternary structure, component of the eukaryotic translation initiation factor 3 (eIF-3) complex. The eIF-3 complex interacts with pix.

It localises to the cytoplasm. In terms of biological role, component of the eukaryotic translation initiation factor 3 (eIF-3) complex, which is involved in protein synthesis of a specialized repertoire of mRNAs and, together with other initiation factors, stimulates binding of mRNA and methionyl-tRNAi to the 40S ribosome. The eIF-3 complex specifically targets and initiates translation of a subset of mRNAs involved in cell proliferation. In Drosophila yakuba (Fruit fly), this protein is Eukaryotic translation initiation factor 3 subunit J.